Reading from the N-terminus, the 79-residue chain is Small ribosomal subunit protein bS21 (79 aa).

Residues 59 to 79 form a disordered region; it reads RKKMQREGLLPMKPKPVVGVR.

Belongs to the bacterial ribosomal protein bS21 family.

This Methylocella silvestris (strain DSM 15510 / CIP 108128 / LMG 27833 / NCIMB 13906 / BL2) protein is Small ribosomal subunit protein bS21.